Here is a 304-residue protein sequence, read N- to C-terminus: Ribonuclease Z (304 aa).

Zn(2+) contacts are provided by His63, His65, Asp67, His68, His143, Asp213, and His271. Asp67 serves as the catalytic Proton acceptor.

Belongs to the RNase Z family. In terms of assembly, homodimer. Requires Zn(2+) as cofactor.

The enzyme catalyses Endonucleolytic cleavage of RNA, removing extra 3' nucleotides from tRNA precursor, generating 3' termini of tRNAs. A 3'-hydroxy group is left at the tRNA terminus and a 5'-phosphoryl group is left at the trailer molecule.. Its function is as follows. Zinc phosphodiesterase, which displays some tRNA 3'-processing endonuclease activity. Probably involved in tRNA maturation, by removing a 3'-trailer from precursor tRNA. In Porphyromonas gingivalis (strain ATCC BAA-308 / W83), this protein is Ribonuclease Z.